The following is a 115-amino-acid chain: Waprin-like protein (115 aa).

A signal peptide spans 1-21 (MNRSLLAFAIVLVLLVAGTSS). The WAP domain occupies 23-69 (LFNKSGNCPMRNTVTSCTPRCIGDGECSSNQKCCPNKCGTTSCANSS). Disulfide bonds link cysteine 30–cysteine 56, cysteine 39–cysteine 60, cysteine 43–cysteine 55, and cysteine 49–cysteine 65.

Belongs to the venom waprin family. Cys-rich waprin subfamily. As to expression, expressed by the venom gland.

Its subcellular location is the secreted. Functionally, antimicrobial peptides with activity against Gram-positive and Gram-negative bacteria as well as fungi. Recognizes carbohydrates in the microbial cell walls, and induces structural damage to them. Also inhibits microbial serine proteases, as well as mammalian elastases. Carbohydrates that are recognized are LPS, mannan, peptidoglycan, and N-acetl-D-glucosamine. The polypeptide is Waprin-like protein (Tetramorium bicarinatum (Tramp ant)).